Consider the following 306-residue polypeptide: Probable rRNA-processing protein EBP2 (306 aa).

Met1 is modified (N-acetylmethionine). Disordered regions lie at residues 1–20 (MDTP…LASD), 75–103 (GPVP…DDFQ), and 150–169 (IRQK…KAKQ). Thr3 carries the phosphothreonine modification. Residues Ser7, Ser9, Ser11, and Ser13 each carry the phosphoserine modification. Polar residues predominate over residues 81–90 (SETQPTPQNQ). Basic and acidic residues predominate over residues 91 to 103 (DQKKGVNPEDDFQ). Lys93 participates in a covalent cross-link: Glycyl lysine isopeptide (Lys-Gly) (interchain with G-Cter in SUMO2). The stretch at 135–171 (DYFAEMAKSDQQMQKIRQKLQTKQAAMEKSEKAKQLR) forms a coiled coil. Glycyl lysine isopeptide (Lys-Gly) (interchain with G-Cter in SUMO2) cross-links involve residues Lys179 and Lys218. Positions 213–224 (LEGDQKPVERSA) are enriched in basic and acidic residues. Residues 213–306 (LEGDQKPVER…ARQKLKSKAR (94 aa)) form a disordered region. Phosphoserine occurs at positions 264 and 270. Residues 274-306 (KVAHGKGSRRPGKKGANKRPGKRARQKLKSKAR) show a composition bias toward basic residues.

It belongs to the EBP2 family. Interacts with WDR46.

It localises to the nucleus. The protein localises to the nucleolus. Required for the processing of the 27S pre-rRNA. The polypeptide is Probable rRNA-processing protein EBP2 (Ebna1bp2) (Mus musculus (Mouse)).